Here is a 537-residue protein sequence, read N- to C-terminus: Caspase recruitment domain-containing protein 8 (537 aa).

A compositionally biased stretch (basic and acidic residues) spans 1-23 (MEKKECPEKSSSSEEELPRRDSG). Disordered regions lie at residues 1–28 (MEKKECPEKSSSSEEELPRRDSGSSRNI) and 113–133 (GDIPSVSEEQESSEGQDSGDI). Residues 161 to 296 (FLGPEGNVDV…FYAVLESPSF (136 aa)) are ZU5. One can recognise an FIIND domain in the interval 161–446 (FLGPEGNVDV…LQLVAASAPP (286 aa)). Residues 297-446 (SLMGILLRIA…LQLVAASAPP (150 aa)) are UPA. The 91-residue stretch at 446–536 (PPFSGAAFVK…YLVSYLRQQN (91 aa)) folds into the CARD domain.

As to quaternary structure, interacts with DPP9; leading to inhibit activation of the inflammasome. DPP9 acts via formation of a ternary complex, composed of a DPP9 homodimer, one full-length CARD8 protein, and one cleaved C-terminus of CARD8 (Caspase recruitment domain-containing protein 8, C-terminus). Interacts with DPP8; leading to inhibit activation of the inflammasome, probably via formation of a ternary complex with DPP8. Interacts with NLRP3. Interacts with IKBKG/NEMO. Interacts with DRAL. Binds to caspase-1 (CASP1), CARD16/pseudo-ICE and CARD18/ICEBERG. Interacts with NLRP2 (via NACHT domain). In terms of assembly, interacts with the C-terminal part of CARD8 (Caspase recruitment domain-containing protein 8, C-terminus) in absence of pathogens and other damage-associated signals. Interacts with the N-terminal part of CARD8 (Caspase recruitment domain-containing protein 8, N-terminus) in absence of pathogens and other damage-associated signals. Homomultimer; forms the CARD8 inflammasome polymeric complex, a filament composed of homopolymers of this form in response to pathogens and other damage-associated signals. The CARD8 inflammasome polymeric complex directly recruits pro-caspase-1 (proCASP1) independently of PYCARD/ASC. Interacts (via CARD domain) with CASP1 (via CARD domain); leading to CASP1 activation. In terms of processing, undergoes autocatalytic processing within the FIIND domain to generate the N-terminal and C-terminal parts, which are associated non-covalently in absence of pathogens and other damage-associated signals. Ubiquitinated by the N-end rule pathway in response to pathogens and other damage-associated signals, leading to its degradation by the proteasome and subsequent release of the cleaved C-terminal part of the protein (Caspase recruitment domain-containing protein 8, C-terminus), which polymerizes and forms the CARD8 inflammasome. Post-translationally, (Microbial infection) Proteolytic cleavage by HIV-1 protease in the disordered region and within the ZU5 region of the FIIND domain promotes ubiquitination of the N-terminal part by the N-end rule pathway and degradation by the proteasome, releasing the cleaved C-terminal part of the protein (Caspase recruitment domain-containing protein 8, C-terminus), which polymerizes and forms the CARD8 inflammasome. In terms of processing, undergoes less autocatalytic processing within the FIIND domain compared to isoform 5. High expression in lung, ovary, testis and placenta. Lower expression in heart, kidney and liver. Also expressed in spleen, lymph node and bone marrow.

It is found in the cytoplasm. The protein localises to the nucleus. It localises to the inflammasome. CARD8 inflammasome is activated by HIV-1 protease activity: HIV-1 protease cleaves CARD8, promoting ubiquitination and degradation of the N-terminal part, releasing the cleaved C-terminal part of the protein (Caspase recruitment domain-containing protein 8, C-terminus), which polymerizes and forms the CARD8 inflammasome. CARD8 inflammasome is inhibited by DPP8 and DPP9, which sequester the C-terminal fragment of CARD8 (Caspase recruitment domain-containing protein 8, C-terminus) in a ternary complex, thereby preventing CARD8 oligomerization and activation. CARD8 inflammasome is activated by Val-boroPro (Talabostat, PT-100), an inhibitor of dipeptidyl peptidases DPP8 and DPP9. Val-boroPro relieves inhibition of DPP8 and/or DPP9 by inducing the proteasome-mediated destruction of the N-terminal part of CARD8, releasing its C-terminal part from autoinhibition. Indirectly activated by the pseudodipeptide CQ31. CQ31 directly inactivates the peptidases PEPD and XPNPEP1, leading to an accumulation of dipeptides that weaky inhibit DDP8 and DPP9, relieving DPP8- and/or DPP9-mediated inhibition of CARD8. Functionally, inflammasome sensor, which mediates inflammasome activation in response to various pathogen-associated signals, leading to subsequent pyroptosis of CD4(+) T-cells and macrophages. Inflammasomes are supramolecular complexes that assemble in the cytosol in response to pathogens and other damage-associated signals and play critical roles in innate immunity and inflammation. Acts as a recognition receptor (PRR): recognizes specific pathogens and other damage-associated signals, such as HIV-1 protease activity or Val-boroPro inhibitor, and mediates CARD8 inflammasome activation. In response to pathogen-associated signals, the N-terminal part of CARD8 is degraded by the proteasome, releasing the cleaved C-terminal part of the protein (Caspase recruitment domain-containing protein 8, C-terminus), which polymerizes to initiate the formation of the inflammasome complex: the CARD8 inflammasome directly recruits pro-caspase-1 (proCASP1) independently of PYCARD/ASC and promotes caspase-1 (CASP1) activation, which subsequently cleaves and activates inflammatory cytokines IL1B and IL18 and gasdermin-D (GSDMD), leading to pyroptosis. Ability to sense HIV-1 protease activity leads to the clearance of latent HIV-1 in patient CD4(+) T-cells after viral reactivation; in contrast, HIV-1 can evade CARD8-sensing when its protease remains inactive in infected cells prior to viral budding. Also acts as a negative regulator of the NLRP3 inflammasome. May also act as an inhibitor of NF-kappa-B activation. In terms of biological role, constitutes the precursor of the CARD8 inflammasome, which mediates autoproteolytic processing within the FIIND domain to generate the N-terminal and C-terminal parts, which are associated non-covalently in absence of pathogens and other damage-associated signals. Regulatory part that prevents formation of the CARD8 inflammasome: in absence of pathogens and other damage-associated signals, interacts with the C-terminal part of CARD8 (Caspase recruitment domain-containing protein 8, C-terminus), preventing activation of the CARD8 inflammasome. In response to pathogen-associated signals, this part is ubiquitinated by the N-end rule pathway and degraded by the proteasome, releasing the cleaved C-terminal part of the protein, which polymerizes and forms the CARD8 inflammasome. Its function is as follows. Constitutes the active part of the CARD8 inflammasome. In absence of pathogens and other damage-associated signals, interacts with the N-terminal part of CARD8 (Caspase recruitment domain-containing protein 8, N-terminus), preventing activation of the CARD8 inflammasome. In response to pathogen-associated signals, the N-terminal part of CARD8 is degraded by the proteasome, releasing this form, which polymerizes to form the CARD8 inflammasome complex: the CARD8 inflammasome complex then directly recruits pro-caspase-1 (proCASP1) and promotes caspase-1 (CASP1) activation, leading to gasdermin-D (GSDMD) cleavage and subsequent pyroptosis. The sequence is that of Caspase recruitment domain-containing protein 8 from Homo sapiens (Human).